A 695-amino-acid chain; its full sequence is Polyribonucleotide nucleotidyltransferase (695 aa).

Positions 486 and 492 each coordinate Mg(2+). Positions Pro553–Val612 constitute a KH domain. In terms of domain architecture, S1 motif spans Gly622–Lys690.

The protein belongs to the polyribonucleotide nucleotidyltransferase family. Component of the RNA degradosome, which is a multiprotein complex involved in RNA processing and mRNA degradation. Requires Mg(2+) as cofactor.

Its subcellular location is the cytoplasm. It carries out the reaction RNA(n+1) + phosphate = RNA(n) + a ribonucleoside 5'-diphosphate. Involved in mRNA degradation. Catalyzes the phosphorolysis of single-stranded polyribonucleotides processively in the 3'- to 5'-direction. The sequence is that of Polyribonucleotide nucleotidyltransferase from Nitrosococcus oceani (strain ATCC 19707 / BCRC 17464 / JCM 30415 / NCIMB 11848 / C-107).